The sequence spans 328 residues: Sphingolipid delta(4)-desaturase DES1-like (328 aa).

The next 3 membrane-spanning stretches (helical) occupy residues 50–70 (PLAF…ATLL), 78–98 (ILTV…LAIH), and 114–134 (WLGI…FQKY). Residues 98–102 (HELSH) carry the Histidine box-1 motif. The Histidine box-2 motif lies at 135–139 (HLEHH). A run of 3 helical transmembrane segments spans residues 164-184 (LSKS…PLFL), 192-212 (WEFT…YFFG), and 217-237 (AYLI…GHFI). The Histidine box-3 signature appears at 266 to 270 (HNEHH).

It belongs to the fatty acid desaturase type 1 family. DEGS subfamily.

It is found in the endoplasmic reticulum membrane. The catalysed reaction is an N-acylsphinganine + 2 Fe(II)-[cytochrome b5] + O2 + 2 H(+) = an N-acylsphing-4-enine + 2 Fe(III)-[cytochrome b5] + 2 H2O. Its function is as follows. Sphingolipid-delta-4-desaturase required for the biosynthesis of delta-4-unsaturated sphingolipids and derivatives. This is Sphingolipid delta(4)-desaturase DES1-like from Oryza sativa subsp. japonica (Rice).